A 264-amino-acid polypeptide reads, in one-letter code: 5'-nucleotidase SurE (264 aa).

A divalent metal cation is bound by residues Asp8, Asp9, Ser41, and Asn98.

The protein belongs to the SurE nucleotidase family. Requires a divalent metal cation as cofactor.

It is found in the cytoplasm. It carries out the reaction a ribonucleoside 5'-phosphate + H2O = a ribonucleoside + phosphate. Nucleotidase that shows phosphatase activity on nucleoside 5'-monophosphates. This chain is 5'-nucleotidase SurE, found in Carboxydothermus hydrogenoformans (strain ATCC BAA-161 / DSM 6008 / Z-2901).